Consider the following 90-residue polypeptide: UPF0367 protein P9301_01411 (90 aa).

The protein belongs to the UPF0367 family.

The protein is UPF0367 protein P9301_01411 of Prochlorococcus marinus (strain MIT 9301).